A 476-amino-acid polypeptide reads, in one-letter code: Mitochondrial-processing peptidase subunit beta (476 aa).

A mitochondrion-targeting transit peptide spans 1–28; it reads MASRRLALNLAQGVKARAGGVINPFRRG. Position 84 (His84) interacts with Zn(2+). Residue Glu87 is the Proton acceptor of the active site. Zn(2+) contacts are provided by His88 and Glu164.

The protein belongs to the peptidase M16 family. In terms of assembly, heterodimer of mpp (alpha) and pep (beta) subunits, forming the mitochondrial processing protease (MPP) in which mpp is involved in substrate recognition and binding and pep is the catalytic subunit. Component of the ubiquinol-cytochrome c oxidoreductase (cytochrome b-c1 complex, complex III, CIII), a multisubunit enzyme composed of 10 subunits. The complex is composed of 3 respiratory subunits cytochrome b (cob), cytochrome c1 (cyt-1) and Rieske protein (fes-1), 2 core protein subunits pep and ucr-1, and 5 low-molecular weight protein subunits qcr6, qcr7, qcr8, qcr9 and probably NCU16844/qcr10. The complex exists as an obligatory dimer and forms supercomplexes (SCs) in the inner mitochondrial membrane with NADH-ubiquinone oxidoreductase (complex I, CI) and cytochrome c oxidase (complex IV, CIV), resulting in different assemblies (supercomplexes SCI(1)III(2), SCIII(2)IV(1) and SCIII(2)IV(2) as well as higher order I(x)III(y)IV(z) megacomplexes). Zn(2+) serves as cofactor.

The protein localises to the mitochondrion matrix. It localises to the mitochondrion inner membrane. The catalysed reaction is Release of N-terminal transit peptides from precursor proteins imported into the mitochondrion, typically with Arg in position P2.. Binding to mpp is required for catalytic activity. Inhibited by metal chelator ethylenediaminetetraacetic acid (EDTA). In terms of biological role, catalytic subunit of the essential mitochondrial processing protease (MPP), which cleaves the mitochondrial sequence off newly imported precursors proteins. Preferentially, cleaves after an arginine at position P2. Functionally, component of the ubiquinol-cytochrome c oxidoreductase, a multisubunit transmembrane complex that is part of the mitochondrial electron transport chain which drives oxidative phosphorylation. The respiratory chain contains 3 multisubunit complexes succinate dehydrogenase (complex II, CII), ubiquinol-cytochrome c oxidoreductase (cytochrome b-c1 complex, complex III, CIII) and cytochrome c oxidase (complex IV, CIV), that cooperate to transfer electrons derived from NADH and succinate to molecular oxygen, creating an electrochemical gradient over the inner membrane that drives transmembrane transport and the ATP synthase. The cytochrome b-c1 complex catalyzes electron transfer from ubiquinol to cytochrome c, linking this redox reaction to translocation of protons across the mitochondrial inner membrane, with protons being carried across the membrane as hydrogens on the quinol. In the process called Q cycle, 2 protons are consumed from the matrix, 4 protons are released into the intermembrane space and 2 electrons are passed to cytochrome c. This chain is Mitochondrial-processing peptidase subunit beta, found in Neurospora crassa (strain ATCC 24698 / 74-OR23-1A / CBS 708.71 / DSM 1257 / FGSC 987).